Here is a 101-residue protein sequence, read N- to C-terminus: Large ribosomal subunit protein uL24c (101 aa).

Belongs to the universal ribosomal protein uL24 family. In terms of assembly, part of the 50S ribosomal subunit.

It is found in the plastid. The protein localises to the chloroplast. In terms of biological role, one of two assembly initiator proteins, it binds directly to the 5'-end of the 23S rRNA, where it nucleates assembly of the 50S subunit. The polypeptide is Large ribosomal subunit protein uL24c (rpl24) (Guillardia theta (Cryptophyte)).